The chain runs to 147 residues: Phospholipase A2 inhibitor subunit A (147 aa).

The C-type lectin domain occupies 62 to 143; it reads EICRQAGGRI…DDNLLVVCEF (82 aa). 2 cysteine pairs are disulfide-bonded: Cys-64–Cys-141 and Cys-119–Cys-133. Asn-103 carries N-linked (GlcNAc...) asparagine glycosylation.

This sequence belongs to the alpha-type phospholipase A2 inhibitor family. As to quaternary structure, homotrimer; non-covalently linked. Glycosylated. As to expression, expressed by the liver.

The protein localises to the secreted. Inhibits the enzymatic activity of the acidic phospholipase A2 (PLA2). The sequence is that of Phospholipase A2 inhibitor subunit A from Gloydius brevicaudus siniticus (Chinese mamushi).